We begin with the raw amino-acid sequence, 129 residues long: Transcriptional activator protein (129 aa).

The short motif at 13 to 28 (KAQHRAAKRRAIRRRR) is the Nuclear localization signal element. A zinc finger spans residues 33–50 (CGCSIYIHIDCRNNGFTH). Positions 73–118 (LFQDNQRRGSPLHQHQDIPLTNQVQPQPEESIGSPQGISQLPSMDD) are disordered. Residues 91 to 114 (PLTNQVQPQPEESIGSPQGISQLP) show a composition bias toward polar residues. Positions 115–129 (SMDDIDDSFWENLFK) are transactivation.

Belongs to the geminiviridae transcriptional activator protein family. Monomer. Homodimer. Homooligomer. Self-interaction correlates with nuclear localization and efficient activation of transcription. Monomers suppress local silencing by interacting with and inactivating host adenosine kinase (ADK) in the cytoplasm. Interacts with and inhibits host SNF1 kinase. Binds to ssDNA. Phosphorylated.

The protein localises to the host nucleus. It localises to the host cytoplasm. Strong activator of the late viral genes promoters. Enhances the expression of the capsid protein and nuclear shuttle protein. Acts as a suppressor of RNA-mediated gene silencing, also known as post-transcriptional gene silencing (PTGS), a mechanism of plant viral defense that limits the accumulation of viral RNAs. Suppresses the host RNA silencing by inhibiting adenosine kinase (ADK), a kinase involved in a general methylation pathway. Also suppresses the host basal defense by interacting with and inhibiting SNF1 kinase, a key regulator of cell metabolism implicated in innate antiviral defense. Determines pathogenicity. In Tomato golden mosaic virus (strain Yellow vein) (TGMV), this protein is Transcriptional activator protein.